Reading from the N-terminus, the 690-residue chain is Protein arginine N-methyltransferase 7 (690 aa).

SAM-dependent MTase PRMT-type domains follow at residues 14–357 (QNSW…YSLW) and 366–690 (TKSV…QKKL).

The protein belongs to the class I-like SAM-binding methyltransferase superfamily. Protein arginine N-methyltransferase family. PRMT7 subfamily. In terms of tissue distribution, expressed at low level in ovary.

Its function is as follows. Essential arginine methyltransferase that can both catalyze the formation of omega-N monomethylarginine (MMA) and symmetrical dimethylarginine (sDMA). Specifically mediates the symmetrical dimethylation of arginine residues in the small nuclear ribonucleoproteins SmD1 and SmD3. This Drosophila melanogaster (Fruit fly) protein is Protein arginine N-methyltransferase 7 (Art7).